The following is a 457-amino-acid chain: RuvB-like helicase 1 (457 aa).

73-80 lines the ATP pocket; it reads GGPSTGKT.

It belongs to the RuvB family. May form heterododecamers with RVB2. Component of the SWR1 chromatin remodeling complex, the INO80 chromatin remodeling complex, and of the R2TP complex.

The protein resides in the nucleus. The enzyme catalyses ATP + H2O = ADP + phosphate + H(+). In terms of biological role, DNA helicase which participates in several chromatin remodeling complexes, including the SWR1 and the INO80 complexes. The SWR1 complex mediates the ATP-dependent exchange of histone H2A for the H2A variant HZT1 leading to transcriptional regulation of selected genes by chromatin remodeling. The INO80 complex remodels chromatin by shifting nucleosomes and is involved in DNA repair. Also involved in pre-rRNA processing. The polypeptide is RuvB-like helicase 1 (RVB1) (Kluyveromyces lactis (strain ATCC 8585 / CBS 2359 / DSM 70799 / NBRC 1267 / NRRL Y-1140 / WM37) (Yeast)).